The chain runs to 106 residues: Large ribosomal subunit protein uL24 (106 aa).

This sequence belongs to the universal ribosomal protein uL24 family. As to quaternary structure, part of the 50S ribosomal subunit.

Its function is as follows. One of two assembly initiator proteins, it binds directly to the 5'-end of the 23S rRNA, where it nucleates assembly of the 50S subunit. One of the proteins that surrounds the polypeptide exit tunnel on the outside of the subunit. This is Large ribosomal subunit protein uL24 from Paramagnetospirillum magneticum (strain ATCC 700264 / AMB-1) (Magnetospirillum magneticum).